Consider the following 397-residue polypeptide: CCA-adding enzyme (397 aa).

2 residues coordinate ATP: Gly-27 and Arg-30. Gly-27 and Arg-30 together coordinate CTP. Mg(2+) contacts are provided by Asp-40 and Asp-42. Arg-111, Asp-154, Arg-157, Arg-160, and Arg-163 together coordinate ATP. Arg-111, Asp-154, Arg-157, Arg-160, and Arg-163 together coordinate CTP.

It belongs to the tRNA nucleotidyltransferase/poly(A) polymerase family. Bacterial CCA-adding enzyme type 3 subfamily. In terms of assembly, homodimer. The cofactor is Mg(2+).

It carries out the reaction a tRNA precursor + 2 CTP + ATP = a tRNA with a 3' CCA end + 3 diphosphate. It catalyses the reaction a tRNA with a 3' CCA end + 2 CTP + ATP = a tRNA with a 3' CCACCA end + 3 diphosphate. Functionally, catalyzes the addition and repair of the essential 3'-terminal CCA sequence in tRNAs without using a nucleic acid template. Adds these three nucleotides in the order of C, C, and A to the tRNA nucleotide-73, using CTP and ATP as substrates and producing inorganic pyrophosphate. Has no poly(A) polymerase activity. This chain is CCA-adding enzyme, found in Bacillus subtilis (strain 168).